The chain runs to 367 residues: tRNA/tmRNA (uracil-C(5))-methyltransferase (367 aa).

Glutamine 190, tyrosine 218, asparagine 223, glutamate 239, and aspartate 299 together coordinate S-adenosyl-L-methionine. Cysteine 324 (nucleophile) is an active-site residue. Glutamate 358 acts as the Proton acceptor in catalysis.

This sequence belongs to the class I-like SAM-binding methyltransferase superfamily. RNA M5U methyltransferase family. TrmA subfamily.

The catalysed reaction is uridine(54) in tRNA + S-adenosyl-L-methionine = 5-methyluridine(54) in tRNA + S-adenosyl-L-homocysteine + H(+). The enzyme catalyses uridine(341) in tmRNA + S-adenosyl-L-methionine = 5-methyluridine(341) in tmRNA + S-adenosyl-L-homocysteine + H(+). Functionally, dual-specificity methyltransferase that catalyzes the formation of 5-methyluridine at position 54 (m5U54) in all tRNAs, and that of position 341 (m5U341) in tmRNA (transfer-mRNA). This chain is tRNA/tmRNA (uracil-C(5))-methyltransferase, found in Yersinia pestis bv. Antiqua (strain Antiqua).